A 100-amino-acid chain; its full sequence is MIREERLLKVLRAPHVSEKASTAMEKHNTIVLKVAKDATKAEIKAAVHKLFEVEVNDVRTLVVKGKTKRHGQRIGRRSDWKKAYVTLKEGQNLDFIGGAE.

The protein belongs to the universal ribosomal protein uL23 family. Part of the 50S ribosomal subunit. Contacts protein L29, and trigger factor when it is bound to the ribosome.

Its function is as follows. One of the early assembly proteins it binds 23S rRNA. One of the proteins that surrounds the polypeptide exit tunnel on the outside of the ribosome. Forms the main docking site for trigger factor binding to the ribosome. The polypeptide is Large ribosomal subunit protein uL23 (Sodalis glossinidius (strain morsitans)).